The following is a 51-amino-acid chain: DNA-binding protein (51 aa).

Positions 1-51 (MVYRRRRSRSADGTYTRRRRSSGYRRRPGRPRTYRRSRSATRRSGYRRRRY) are disordered. 2 consecutive repeat copies span residues 5–10 (RRRSRS) and 17–22 (RRRRSS). The tract at residues 5–22 (RRRSRSADGTYTRRRRSS) is 2 X 6 AA repeats of R-R-R-R-S-S. Positions 16–51 (TRRRRSSGYRRRPGRPRTYRRSRSATRRSGYRRRRY) are enriched in basic residues.

In terms of processing, probably phosphorylated in infected cells.

It localises to the virion. Thought to be responsible for DNA condensation during packaging of the nucleocapsids. The polypeptide is DNA-binding protein (P6.5) (Orgyia pseudotsugata (Douglas-fir tussock moth)).